Here is a 60-residue protein sequence, read N- to C-terminus: Small, acid-soluble spore protein H 2 (60 aa).

Residues 38-60 are disordered; the sequence is TIHPLDNPSQKQSVPVASLEEHS.

It belongs to the SspH family.

It is found in the spore core. This Geobacillus thermodenitrificans (strain NG80-2) protein is Small, acid-soluble spore protein H 2.